A 370-amino-acid polypeptide reads, in one-letter code: Calcium-binding protein 1 (370 aa).

Positions 1–198 (MGGGDGAAFK…GRGDSVPAAA (198 aa)) are disordered. The N-myristoyl glycine moiety is linked to residue glycine 2. Residue glycine 4 is the site of S-palmitoyl cysteine attachment. Composition is skewed to low complexity over residues 50 to 61 (HASAGPAAMSSH), 68 to 84 (KTSLLKAAAAAASGGSR), and 148 to 157 (ALPAAASRPS). EF-hand domains lie at 225–260 (EEIEELREAFREFDKDKDGYINCRDLGNCMRTMGYM), 279–296 (GHVDFDDFVELMGPKLLA), 302–337 (IGVKELRDAFREFDTNGDGEISTSELREAMRKLLGH), and 339–370 (VGHRDIEEIIRDVDLNGDGRVDFEEFVRMMSR). Aspartate 238, aspartate 240, aspartate 242, tyrosine 244, and aspartate 249 together coordinate Ca(2+). Mg(2+) contacts are provided by aspartate 238, aspartate 240, aspartate 242, and tyrosine 244. Residues aspartate 315, asparagine 317, aspartate 319, and glutamate 321 each coordinate Ca(2+). At serine 323 the chain carries Phosphoserine. Ca(2+) is bound by residues glutamate 326, aspartate 352, leucine 353, asparagine 354, aspartate 356, glycine 357, arginine 358, aspartate 360, and glutamate 363.

As to quaternary structure, homodimer; when bound to calcium or magnesium. Interacts (via C-terminus) with ITPR1, ITPR2 and ITPR3. This binding is calcium dependent and the interaction correlates with calcium concentration. An additional calcium-independent interaction with the N-terminus of ITPR1 results in a decreased InsP(3) binding to the receptor. Interacts with CACNA1A (via C-terminal CDB motif) in the pre- and postsynaptic membranes. Interacts with CACNA1C (via C-terminal C and IQ motifs). The binding to the C motif is calcium independent whereas the binding to IQ requires the presence of calcium and is mutually exclusive with calmodulin binding. Interacts with CACNA1D. Interacts with TRPC5 (via C-terminus). Interacts (via EF-hands 1 and 2) at microtubules with MAP1LC3B. Interacts with MYO1C. Interacts (via EF-hands 1 and 2) with NSMF (via the central NLS-containing motif region), the interaction occurs in a calcium dependent manner after synaptic NMDA receptor stimulation and prevents nuclear import of NSMF. Interacts with SPACA9. In terms of processing, phosphorylated. The phosphorylation regulates the activity. As to expression, retina and brain. Somatodendritic compartment of neurons. Calbrain was found exclusively in brain where it is abundant in the hippocampus, habenular area in the epithalamus and in the cerebellum.

It localises to the cytoplasm. The protein localises to the cytoskeleton. Its subcellular location is the perinuclear region. The protein resides in the cell membrane. It is found in the golgi apparatus. It localises to the postsynaptic density. The protein localises to the cell cortex. Modulates calcium-dependent activity of inositol 1,4,5-triphosphate receptors (ITPRs). Inhibits agonist-induced intracellular calcium signaling. Enhances inactivation and does not support calcium-dependent facilitation of voltage-dependent P/Q-type calcium channels. Causes calcium-dependent facilitation and inhibits inactivation of L-type calcium channels by binding to the same sites as calmodulin in the C-terminal domain of CACNA1C, but has an opposite effect on channel function. Suppresses the calcium-dependent inactivation of CACNA1D. Inhibits TRPC5 channels. Prevents NMDA receptor-induced cellular degeneration. Required for the normal transfer of light signals through the retina. The chain is Calcium-binding protein 1 (CABP1) from Homo sapiens (Human).